The following is a 439-amino-acid chain: Probable glycine dehydrogenase (decarboxylating) subunit 1 (439 aa).

Belongs to the GcvP family. N-terminal subunit subfamily. The glycine cleavage system is composed of four proteins: P, T, L and H. In this organism, the P 'protein' is a heterodimer of two subunits.

The catalysed reaction is N(6)-[(R)-lipoyl]-L-lysyl-[glycine-cleavage complex H protein] + glycine + H(+) = N(6)-[(R)-S(8)-aminomethyldihydrolipoyl]-L-lysyl-[glycine-cleavage complex H protein] + CO2. The glycine cleavage system catalyzes the degradation of glycine. The P protein binds the alpha-amino group of glycine through its pyridoxal phosphate cofactor; CO(2) is released and the remaining methylamine moiety is then transferred to the lipoamide cofactor of the H protein. The polypeptide is Probable glycine dehydrogenase (decarboxylating) subunit 1 (Aquifex aeolicus (strain VF5)).